A 253-amino-acid chain; its full sequence is Sulfate transporter CysZ (253 aa).

4 helical membrane passes run 31 to 51 (FVIL…WWLF), 72 to 92 (LSYI…GYFF), 151 to 171 (IVLL…PVLW), and 222 to 242 (IPVL…AMWV).

The protein belongs to the CysZ family.

Its subcellular location is the cell inner membrane. Its function is as follows. High affinity, high specificity proton-dependent sulfate transporter, which mediates sulfate uptake. Provides the sulfur source for the cysteine synthesis pathway. This is Sulfate transporter CysZ from Escherichia fergusonii (strain ATCC 35469 / DSM 13698 / CCUG 18766 / IAM 14443 / JCM 21226 / LMG 7866 / NBRC 102419 / NCTC 12128 / CDC 0568-73).